We begin with the raw amino-acid sequence, 414 residues long: Gamma-glutamyl phosphate reductase (414 aa).

The protein belongs to the gamma-glutamyl phosphate reductase family.

It localises to the cytoplasm. The catalysed reaction is L-glutamate 5-semialdehyde + phosphate + NADP(+) = L-glutamyl 5-phosphate + NADPH + H(+). The protein operates within amino-acid biosynthesis; L-proline biosynthesis; L-glutamate 5-semialdehyde from L-glutamate: step 2/2. Catalyzes the NADPH-dependent reduction of L-glutamate 5-phosphate into L-glutamate 5-semialdehyde and phosphate. The product spontaneously undergoes cyclization to form 1-pyrroline-5-carboxylate. This chain is Gamma-glutamyl phosphate reductase, found in Geobacillus thermodenitrificans (strain NG80-2).